Consider the following 204-residue polypeptide: Large ribosomal subunit protein eL15B (204 aa).

A disordered region spans residues 165–185 (TATGKKSRGINKGHKFNNTKA). Basic residues predominate over residues 169 to 185 (KKSRGINKGHKFNNTKA).

This sequence belongs to the eukaryotic ribosomal protein eL15 family. As to quaternary structure, component of the large ribosomal subunit (LSU). Mature yeast ribosomes consist of a small (40S) and a large (60S) subunit. The 40S small subunit contains 1 molecule of ribosomal RNA (18S rRNA) and 33 different proteins (encoded by 57 genes). The large 60S subunit contains 3 rRNA molecules (25S, 5.8S and 5S rRNA) and 46 different proteins (encoded by 81 genes).

It localises to the cytoplasm. Its function is as follows. Component of the ribosome, a large ribonucleoprotein complex responsible for the synthesis of proteins in the cell. The small ribosomal subunit (SSU) binds messenger RNAs (mRNAs) and translates the encoded message by selecting cognate aminoacyl-transfer RNA (tRNA) molecules. The large subunit (LSU) contains the ribosomal catalytic site termed the peptidyl transferase center (PTC), which catalyzes the formation of peptide bonds, thereby polymerizing the amino acids delivered by tRNAs into a polypeptide chain. The nascent polypeptides leave the ribosome through a tunnel in the LSU and interact with protein factors that function in enzymatic processing, targeting, and the membrane insertion of nascent chains at the exit of the ribosomal tunnel. This is Large ribosomal subunit protein eL15B from Saccharomyces cerevisiae (strain ATCC 204508 / S288c) (Baker's yeast).